We begin with the raw amino-acid sequence, 233 residues long: Putative T-box protein 41 (233 aa).

The T-box DNA-binding region spans methionine 1–lysine 146.

The protein localises to the nucleus. The protein is Putative T-box protein 41 (tbx-41) of Caenorhabditis elegans.